We begin with the raw amino-acid sequence, 200 residues long: ATP synthase subunit s, mitochondrial (200 aa).

Residues 1–25 (MMPFGKISQQLCGVKKLPWSCDSRY) constitute a mitochondrion transit peptide. The tract at residues 1–61 (MMPFGKISQQ…SEWLLRCGAM (61 aa)) is N-terminal domain. Gly-59 is a binding site for Mg(2+). LRR repeat units follow at residues 62 to 87 (VRYH…KYKI), 88 to 116 (QAID…KIRL), 117 to 141 (CKCH…KTIL), and 142 to 173 (EMEI…LSDL). Mg(2+) is bound at residue Thr-93.

This sequence belongs to the ATP synthase subunit s family. In terms of assembly, homotetramer. Associates with ATP synthase.

It localises to the mitochondrion. Its subcellular location is the mitochondrion inner membrane. Functionally, involved in regulation of mitochondrial membrane ATP synthase. Necessary for H(+) conduction of ATP synthase. Facilitates energy-driven catalysis of ATP synthesis by blocking a proton leak through an alternative proton exit pathway. The sequence is that of ATP synthase subunit s, mitochondrial from Homo sapiens (Human).